We begin with the raw amino-acid sequence, 629 residues long: tRNA uridine 5-carboxymethylaminomethyl modification enzyme MnmG (629 aa).

Residues 13–18 (GGGHAG), Val-125, and Ser-180 contribute to the FAD site. Residue 273-287 (GPRYCPSIEDKVMRF) coordinates NAD(+). Gln-370 is a binding site for FAD.

It belongs to the MnmG family. In terms of assembly, homodimer. Heterotetramer of two MnmE and two MnmG subunits. Requires FAD as cofactor.

The protein localises to the cytoplasm. NAD-binding protein involved in the addition of a carboxymethylaminomethyl (cmnm) group at the wobble position (U34) of certain tRNAs, forming tRNA-cmnm(5)s(2)U34. This Salmonella schwarzengrund (strain CVM19633) protein is tRNA uridine 5-carboxymethylaminomethyl modification enzyme MnmG.